We begin with the raw amino-acid sequence, 493 residues long: MMSEPKRLHPVAVILNLCHTIIQTIKNIILPFFFVYIVNSNHTVRFYGAIALGVLFIWLVAASIIKWRRFTYRIEDDEFRIEEGLFVTKKRYISIDRIQTMNTSAGLVQQIFKLVKLQIETAGGGKEAEAVLSAISVEEAERIKEAVFKKKAQRRENELDEERLEAEEELDPSVEVQEHYRMNAKELLMAASTSGGIGVIISAVFALISQLDEVLPMDWLFDKFSFLQHASIGIYAVLIFIGLFIAWIFSIAGMMFRYANFQIIKKEQELVISRGIIEKHQVTIPLRKIQAIKIKENIIRQLFGFVTVSIVSAGGGDREKEEGALTILFPMIHKKKLPHMLRTFTPEYTLEENCRRLPRRALKRYLFRSVIFSLFLIIPLCIFFQPWGYLSVILLPIELLFGYLAYKEAAWTINGDRLQLTSRFIGRTTAIVLKKRMQVCKFSQSYFQKKGRLYTISTSVKSSSHMEELTVRDVGEEDAAFILKWYSYEKADG.

6 consecutive transmembrane segments (helical) span residues 18-38 (CHTI…VYIV), 46-66 (FYGA…SIIK), 188-208 (LMAA…FALI), 232-252 (IGIY…FSIA), 370-390 (VIFS…WGYL), and 393-413 (ILLP…AWTI).

The protein belongs to the UPF0699 family.

Its subcellular location is the cell membrane. This chain is UPF0699 transmembrane protein YdbT (ydbT), found in Bacillus subtilis (strain 168).